Reading from the N-terminus, the 157-residue chain is Protein Smg (157 aa).

Belongs to the Smg family.

This Escherichia coli O139:H28 (strain E24377A / ETEC) protein is Protein Smg.